The following is a 1088-amino-acid chain: DNA damage-binding protein 1a (1088 aa).

Belongs to the DDB1 family. In terms of assembly, component of the CDD complex, at least composed of COP10, DET1 and DDB1A. Component of the CUL4-RBX1-CDD complex. Component of the CUL4-RBX1-DDB1-PRL1 E3 ubiquitin-protein ligase complex. Component of the UV-DDB complex, which is composed of DDB1A and DDB2. Interacts with RAE1. Interacts with WDR55. Interacts with ATCSA-1. Interacts with DDA1. Binds to ASG2; the subcellular localization of this complex depends on ASG2 farnesylation status. Binds to KTN80.2/DWA3. Interacts with HTD1. Interacts directly with DHU1.

The protein resides in the cytoplasm. The protein localises to the nucleus. It participates in protein modification; protein ubiquitination. Component of light signal transduction machinery. Involved in repression of photomorphogenesis in darkness by participating in the CDD complex, a complex probably required to regulate the activity of ubiquitin conjugating enzymes (E2s). Repression of photomorphogenesis is probably mediated by ubiquitination and subsequent degradation of photomorphogenesis-promoting factors such as HY5, HYH and LAF1. Plays a role in DNA repair by forming with DDB2 the UV-damaged DNA-binding protein complex (UV-DDB). Component of the CUL4-RBX1-DDB1-PRL1 E3 ubiquitin-protein ligase complex. This is DNA damage-binding protein 1a from Arabidopsis thaliana (Mouse-ear cress).